The sequence spans 232 residues: TIR domain-containing adapter molecule 2 (232 aa).

The span at 1–39 (MGVGKSKLDKCPLSWHKKDSVDADQDGHESDSKNSEEAC) shows a compositional bias: basic and acidic residues. A disordered region spans residues 1–70 (MGVGKSKLDK…EAKGAGPEEQ (70 aa)). Gly-2 carries the N-myristoyl glycine lipid modification. In terms of domain architecture, TIR spans 74 to 226 (EFLKFVILHA…SIWKETRSVS (153 aa)). Residue Tyr-164 is modified to Phosphotyrosine.

Homodimer. Interacts with TLR4, TICAM1, IRF3 and IRF7 in response to LPS. Interacts with IL1R1, IL1RAP, IRAK2, IRAK3 and TRAF6. Interacts with protein kinase-inactive mutants of IRAK1 and IRAK4. Isoform 1 interacts with isoform 2; the interaction occurs in late endosomes and disrupts the interaction between isoform 1 and TICAM1. Interacts with MYD88; the interaction decreases after IL-18 stimulation in a time-dependent manner. Interacts with IL18R1 and IL18RAP. Interacts with TLR2. Interacts with RAB11FIP2. Myristoylated. Required for membrane association which is critical for its ability to initiate efficient signaling. Post-translationally, phosphorylated by PRKCE in response to LPS. Phosphorylation is essential for its function. It is depleted from the membrane upon phosphorylation. Tyrosine phosphorylation is inhibited by phosphatase PTPN4.

Its subcellular location is the cytoplasm. The protein localises to the golgi apparatus. The protein resides in the cell membrane. It localises to the early endosome. It is found in the late endosome. Its subcellular location is the endoplasmic reticulum. The protein localises to the cell projection. The protein resides in the phagocytic cup. Its function is as follows. Functions as a sorting adapter in different signaling pathways to facilitate downstream signaling leading to type I interferon induction. In TLR4 signaling, physically bridges TLR4 and TICAM1 and functionally transmits signal to TICAM1 in early endosomes after endocytosis of TLR4. In TLR2 signaling, physically bridges TLR2 and MYD88 and is required for the TLR2-dependent movement of MYD88 to endosomes following ligand engagement. Involved in IL-18 signaling and is proposed to function as a sorting adapter for MYD88 in IL-18 signaling during adaptive immune response. Forms a complex with RAB11FIP2 that is recruited to the phagosomes to promote the activation of the actin-regulatory GTPases RAC1 and CDC42 and subsequent phagocytosis of Gram-negative bacteria. In Mus musculus (Mouse), this protein is TIR domain-containing adapter molecule 2 (Ticam2).